Here is a 390-residue protein sequence, read N- to C-terminus: DNA polymerase IV (390 aa).

Residues 6 to 187 enclose the UmuC domain; the sequence is VMHVDLDAFF…LDIAVMPGIG (182 aa). Positions 10 and 105 each coordinate Mg(2+). Glu106 is an active-site residue.

The protein belongs to the DNA polymerase type-Y family. As to quaternary structure, monomer. The cofactor is Mg(2+).

It localises to the cytoplasm. It carries out the reaction DNA(n) + a 2'-deoxyribonucleoside 5'-triphosphate = DNA(n+1) + diphosphate. Its function is as follows. Poorly processive, error-prone DNA polymerase involved in untargeted mutagenesis. Copies undamaged DNA at stalled replication forks, which arise in vivo from mismatched or misaligned primer ends. These misaligned primers can be extended by PolIV. Exhibits no 3'-5' exonuclease (proofreading) activity. May be involved in translesional synthesis, in conjunction with the beta clamp from PolIII. In Dehalococcoides mccartyi (strain ATCC BAA-2100 / JCM 16839 / KCTC 5957 / BAV1), this protein is DNA polymerase IV.